A 66-amino-acid chain; its full sequence is Beta-toxin Cll1m (66 aa).

The 66-residue stretch at 1–66 (KEGYIVNLST…VWPLPKKTCT (66 aa)) folds into the LCN-type CS-alpha/beta domain. 4 disulfides stabilise this stretch: Cys12–Cys65, Cys16–Cys41, Cys25–Cys46, and Cys29–Cys48. The residue at position 66 (Thr66) is a Threonine amide.

This sequence belongs to the long (4 C-C) scorpion toxin superfamily. Sodium channel inhibitor family. Beta subfamily. As to expression, expressed by the venom gland.

It localises to the secreted. Beta toxins bind voltage-independently at site-4 of sodium channels (Nav) and shift the voltage of activation toward more negative potentials thereby affecting sodium channel activation and promoting spontaneous and repetitive firing. In Centruroides limpidus (Mexican scorpion), this protein is Beta-toxin Cll1m.